The following is a 767-amino-acid chain: E3 ubiquitin-protein ligase pub1 (767 aa).

One can recognise a C2 domain in the interval Met1 to Arg111. Residues Leu138–Asp158 are compositionally biased toward polar residues. 2 disordered regions span residues Leu138–Asp216 and Ser252–Phe306. Thr156 is modified (phosphothreonine). The span at Pro159 to Ala176 shows a compositional bias: low complexity. Phosphoserine is present on Ser178. Position 180 is a phosphothreonine (Thr180). A compositionally biased stretch (low complexity) spans Ala184–Pro194. In terms of domain architecture, WW 1 spans Trp211–Pro236. Polar residues predominate over residues Asn257–Gly286. WW domains are found at residues Trp294 to Pro319 and Trp351 to Pro376. Residues Phe463–Glu767 enclose the HECT domain. Cys735 functions as the Glycyl thioester intermediate in the catalytic mechanism.

It localises to the membrane. It is found in the cytoplasm. It catalyses the reaction S-ubiquitinyl-[E2 ubiquitin-conjugating enzyme]-L-cysteine + [acceptor protein]-L-lysine = [E2 ubiquitin-conjugating enzyme]-L-cysteine + N(6)-ubiquitinyl-[acceptor protein]-L-lysine.. The protein operates within protein modification; protein ubiquitination. E3 ubiquitin-protein ligase which accepts ubiquitin from an E2 ubiquitin-conjugating enzyme in the form of a thioester and then directly transfers the ubiquitin to targeted substrates. Regulates ubiquitination of cdc25. The polypeptide is E3 ubiquitin-protein ligase pub1 (pub1) (Schizosaccharomyces pombe (strain 972 / ATCC 24843) (Fission yeast)).